Here is a 394-residue protein sequence, read N- to C-terminus: Thioredoxin-interacting protein (394 aa).

Lysine 212 participates in a covalent cross-link: Glycyl lysine isopeptide (Lys-Gly) (interchain with G-Cter in ubiquitin). Serine 361 carries the post-translational modification Phosphoserine.

The protein belongs to the arrestin family. In terms of assembly, homodimer; disulfide-linked. Interacts with TXN/thioredoxin through its redox-active site. Interacts with transcriptional repressors ZBTB16, ZBTB32 and HDAC1. Interacts with DDIT4. In terms of processing, ubiquitinated; undergoes heterotypic 'Lys-48'-/'Lys-63'-branched polyubiquitination catalyzed by ITCH and UBR5 resulting in proteasomal degradation. Deubiquitinated by USP5, leading to TXNIP stabilization.

The protein resides in the cytoplasm. Functionally, may act as an oxidative stress mediator by inhibiting thioredoxin activity or by limiting its bioavailability. Interacts with COPS5 and restores COPS5-induced suppression of CDKN1B stability, blocking the COPS5-mediated translocation of CDKN1B from the nucleus to the cytoplasm. Functions as a transcriptional repressor, possibly by acting as a bridge molecule between transcription factors and corepressor complexes, and over-expression will induce G0/G1 cell cycle arrest. Required for the maturation of natural killer cells. Acts as a suppressor of tumor cell growth. Inhibits the proteasomal degradation of DDIT4, and thereby contributes to the inhibition of the mammalian target of rapamycin complex 1 (mTORC1). In Rattus norvegicus (Rat), this protein is Thioredoxin-interacting protein (Txnip).